We begin with the raw amino-acid sequence, 324 residues long: NADH-ubiquinone oxidoreductase chain 1 (324 aa).

9 helical membrane passes run leucine 9–isoleucine 29, proline 43–isoleucine 63, phenylalanine 77–leucine 97, leucine 106–glycine 126, isoleucine 146–phenylalanine 166, threonine 177–alanine 197, leucine 228–phenylalanine 248, glutamine 259–isoleucine 279, and phenylalanine 299–serine 319.

The protein belongs to the complex I subunit 1 family.

The protein localises to the mitochondrion inner membrane. The catalysed reaction is a ubiquinone + NADH + 5 H(+)(in) = a ubiquinol + NAD(+) + 4 H(+)(out). In terms of biological role, core subunit of the mitochondrial membrane respiratory chain NADH dehydrogenase (Complex I) that is believed to belong to the minimal assembly required for catalysis. Complex I functions in the transfer of electrons from NADH to the respiratory chain. The immediate electron acceptor for the enzyme is believed to be ubiquinone. This Scyliorhinus canicula (Small-spotted catshark) protein is NADH-ubiquinone oxidoreductase chain 1 (MT-ND1).